Consider the following 1503-residue polypeptide: EF-hand calcium-binding domain-containing protein 5 (1503 aa).

The disordered stretch occupies residues 1-23 (MNESASQEELRPAQENRKEDKER). Residues 8–23 (EELRPAQENRKEDKER) are compositionally biased toward basic and acidic residues. Serine 77 bears the Phosphoserine mark. 3 disordered regions span residues 477–518 (ASKT…EQGP), 544–656 (IEPG…QGPY), and 730–750 (FPET…KSQK). Polar residues predominate over residues 549 to 561 (HTESTLEQGSSRR). 2 stretches are compositionally biased toward basic and acidic residues: residues 562–582 (LLTE…HKGS) and 607–622 (GSRR…HKGS). Residues 869 to 904 (RQRLLLEAIFQKWDSDGSGFLDLKEVDELLYTYKEG) form the EF-hand domain. Ca(2+) contacts are provided by aspartate 882, aspartate 884, serine 886, and glutamate 893.

This is EF-hand calcium-binding domain-containing protein 5 (EFCAB5) from Homo sapiens (Human).